The following is a 338-amino-acid chain: Fructose-1,6-bisphosphatase class 1 (338 aa).

Mg(2+) contacts are provided by glutamate 94, aspartate 116, leucine 118, and aspartate 119. Substrate is bound by residues 119 to 122 (DGSS), asparagine 210, and lysine 276. Glutamate 282 serves as a coordination point for Mg(2+).

This sequence belongs to the FBPase class 1 family. As to quaternary structure, homotetramer. It depends on Mg(2+) as a cofactor.

It is found in the cytoplasm. It catalyses the reaction beta-D-fructose 1,6-bisphosphate + H2O = beta-D-fructose 6-phosphate + phosphate. It participates in carbohydrate biosynthesis; gluconeogenesis. The protein is Fructose-1,6-bisphosphatase class 1 of Paraburkholderia phytofirmans (strain DSM 17436 / LMG 22146 / PsJN) (Burkholderia phytofirmans).